The chain runs to 134 residues: Small ribosomal subunit protein bS16 (134 aa).

Residues 79–134 (AGIAKRPSRNNPTKGEPGKKAQERLALAKQAEEEAAAKAAEAAAAAAAPAEEAASE) are disordered. Positions 115–134 (AKAAEAAAAAAAPAEEAASE) are enriched in low complexity.

It belongs to the bacterial ribosomal protein bS16 family.

The chain is Small ribosomal subunit protein bS16 from Brucella suis (strain ATCC 23445 / NCTC 10510).